Reading from the N-terminus, the 215-residue chain is Probable phosphoglycerate mutase GpmB (215 aa).

Residues 8 to 15, 21 to 22, R58, R60, 82 to 85, 104 to 105, and 151 to 152 each bind substrate; these read RHGETQWN, QG, ELNM, RR, and GI. Residue H9 is the Tele-phosphohistidine intermediate of the active site. E82 acts as the Proton donor/acceptor in catalysis.

This sequence belongs to the phosphoglycerate mutase family. GpmB subfamily.

The enzyme catalyses (2R)-2-phosphoglycerate = (2R)-3-phosphoglycerate. The protein operates within carbohydrate degradation; glycolysis; pyruvate from D-glyceraldehyde 3-phosphate: step 3/5. This Shigella boydii serotype 18 (strain CDC 3083-94 / BS512) protein is Probable phosphoglycerate mutase GpmB.